Consider the following 178-residue polypeptide: uncharacterized protein (178 aa).

The region spanning 52-177 (HIAIEDRAHQ…RRLPASFLST (126 aa)) is the MSP domain.

This is an uncharacterized protein from Caenorhabditis elegans.